Consider the following 552-residue polypeptide: uncharacterized protein (552 aa).

Residues 8-200 enclose the DhaL domain; the sequence is KLFADMIIQG…LLCVYEGFLK (193 aa).

This is an uncharacterized protein from Staphylococcus haemolyticus (strain JCSC1435).